An 861-amino-acid polypeptide reads, in one-letter code: Protein argonaute-4 (861 aa).

The 120-residue stretch at 219-338 (PIIEFMCEVL…LPLEVCNIVA (120 aa)) folds into the PAZ domain. The 312-residue stretch at 509–820 (LIVVILPGKT…VAFRARYHLV (312 aa)) folds into the Piwi domain. Positions 825 to 846 (DSAEGSHVSGQSNGRDPQALAK) are disordered.

The protein belongs to the argonaute family. Ago subfamily. As to quaternary structure, interacts with EIF4B, IMP8, PRMT5, TNRC6A and TNRC6B. Interacts with ZFP36. Ubiquitinated on surface-exposed lysines by a SCF-like E3 ubiquitin-protein ligase complex containing ZSWIM8 during target-directed microRNA degradation (TDMD), a process that mediates degradation of microRNAs (miRNAs). Ubiquitination by the SCF-like E3 ubiquitin-protein ligase complex containing ZSWIM8 leads to its subsequent degradation, thereby exposing miRNAs for degradation. ZSWIM8 recognizes and binds AGO4 when it is engaged with a TDMD target.

It is found in the cytoplasm. The protein resides in the P-body. Its function is as follows. Required for RNA-mediated gene silencing (RNAi). Binds to short RNAs such as microRNAs (miRNAs) and represses the translation of mRNAs which are complementary to them. Lacks endonuclease activity and does not appear to cleave target mRNAs. Also required for RNA-directed transcription and replication of the human hapatitis delta virus (HDV). This is Protein argonaute-4 (AGO4) from Homo sapiens (Human).